The chain runs to 380 residues: Homoserine O-acetyltransferase (380 aa).

Positions asparagine 70–isoleucine 366 constitute an AB hydrolase-1 domain. Serine 186 functions as the Nucleophile in the catalytic mechanism. Arginine 250 is a substrate binding site. Catalysis depends on residues aspartate 333 and histidine 361. Residue aspartate 362 coordinates substrate.

This sequence belongs to the AB hydrolase superfamily. MetX family. Homodimer.

It is found in the cytoplasm. The enzyme catalyses L-homoserine + acetyl-CoA = O-acetyl-L-homoserine + CoA. It participates in amino-acid biosynthesis; L-methionine biosynthesis via de novo pathway; O-acetyl-L-homoserine from L-homoserine: step 1/1. In terms of biological role, transfers an acetyl group from acetyl-CoA to L-homoserine, forming acetyl-L-homoserine. In Thermus thermophilus (strain ATCC BAA-163 / DSM 7039 / HB27), this protein is Homoserine O-acetyltransferase.